The sequence spans 367 residues: UDP-N-acetylglucosamine--N-acetylmuramyl-(pentapeptide) pyrophosphoryl-undecaprenol N-acetylglucosamine transferase (367 aa).

Residues 13 to 15, R168, S196, I252, and Q297 each bind UDP-N-acetyl-alpha-D-glucosamine; that span reads TGG.

The protein belongs to the glycosyltransferase 28 family. MurG subfamily.

The protein resides in the cell inner membrane. The catalysed reaction is di-trans,octa-cis-undecaprenyl diphospho-N-acetyl-alpha-D-muramoyl-L-alanyl-D-glutamyl-meso-2,6-diaminopimeloyl-D-alanyl-D-alanine + UDP-N-acetyl-alpha-D-glucosamine = di-trans,octa-cis-undecaprenyl diphospho-[N-acetyl-alpha-D-glucosaminyl-(1-&gt;4)]-N-acetyl-alpha-D-muramoyl-L-alanyl-D-glutamyl-meso-2,6-diaminopimeloyl-D-alanyl-D-alanine + UDP + H(+). Its pathway is cell wall biogenesis; peptidoglycan biosynthesis. Cell wall formation. Catalyzes the transfer of a GlcNAc subunit on undecaprenyl-pyrophosphoryl-MurNAc-pentapeptide (lipid intermediate I) to form undecaprenyl-pyrophosphoryl-MurNAc-(pentapeptide)GlcNAc (lipid intermediate II). The sequence is that of UDP-N-acetylglucosamine--N-acetylmuramyl-(pentapeptide) pyrophosphoryl-undecaprenol N-acetylglucosamine transferase from Methylibium petroleiphilum (strain ATCC BAA-1232 / LMG 22953 / PM1).